The chain runs to 334 residues: D-alanine--D-alanine ligase (334 aa).

Residues 110–306 (KHVLKSLGID…FDHVVDLIVQ (197 aa)) form the ATP-grasp domain. 138-190 (LPYPFVIKPVRGGSTIGVHAIFSKSEYLDLSAHADTLEDRMIVEEYVSGQEVQ) is a binding site for ATP. Positions 258, 272, and 274 each coordinate Mg(2+).

This sequence belongs to the D-alanine--D-alanine ligase family. Mg(2+) is required as a cofactor. Requires Mn(2+) as cofactor.

It localises to the cytoplasm. It catalyses the reaction 2 D-alanine + ATP = D-alanyl-D-alanine + ADP + phosphate + H(+). Its pathway is cell wall biogenesis; peptidoglycan biosynthesis. Functionally, cell wall formation. The chain is D-alanine--D-alanine ligase from Anaplasma marginale (strain Florida).